The chain runs to 871 residues: MVDTKNPGDKTLSVSPTKTLTLKPRVEQGTVRQSFSHGRTKQVVVEKRGKRRIGGDSPGPEPAGTSEPASARTPAAKAPPARAATPAAPRAGSGVVLRKLTEDERSARASALAEAKVRAEEERRIAEAEAARRNSKEGIEQAEREAAEARRKAEEERHRQEEEAKRKAEIEAKRRFGQTESKPAPAKTTTTTTRAAPPARPAAVAADGSDEDEAPRLVRRPGGPARPVIAPKPAAKPAPAKQRGRLTLVTALSADDVRERSIASFRRRTQRLKGHASNEPKEKLVREVVVPEAITIQELANRMAERAVDVIRMLMKQGAMHKITDVIDADTAQLIAEELGHTVKRVAASDVEEGLFDVVDNSTDIEPRSPVVTVMGHVDHGKTSLLDALRHANVVSGEAGGITQHIGAYQVTSPESGKKITFIDTPGHAAFTAMRARGAKVTDLVILVVAADDGVMPQTIEAINHAKAAKVPMIIAINKIDKPEAKPERVRTELLQHEVQVESMGGQVVDVEVSAKNKTNLDKLLEMISLQADLLDLKTNASRPAEGTVIEAKLDRGRGPVATVLVQRGTLRVGDIIVAGAEMGRVRALISDQGETVNEAGPSVPVEVLGFNGPPEAGDRLAVVENEARARQVTSYRAHQKRENAAASTSGMRGSLEQMMSQLKTVGRKDFPLIIKADVQGSLEAILGSLEKLGTDEVAARILHAGVGGISESDVTLAEGFNAAIIGFSVRANKEAAAAAKRNGIEIRYYNIIYDLVDDVKKAMSGLLAPTLRETMLGNAEILEVFNISKVGKVAGCRVTDGSVERGANVRLIRDNVVVHEGKLSTLKRFKDEVKEVQSGQECGMAFESYGDMRVGDVIECYRVETIQRSL.

A disordered region spans residues 1–242; it reads MVDTKNPGDK…PAAKPAPAKQ (242 aa). Residues 68–91 show a composition bias toward low complexity; sequence PASARTPAAKAPPARAATPAAPRA. The segment covering 115–174 has biased composition (basic and acidic residues); it reads AKVRAEEERRIAEAEAARRNSKEGIEQAEREAAEARRKAEEERHRQEEEAKRKAEIEAKR. Composition is skewed to low complexity over residues 182–206 and 225–241; these read KPAP…AVAA and ARPV…APAK. Residues 367–538 enclose the tr-type G domain; sequence PRSPVVTVMG…SLQADLLDLK (172 aa). The interval 376–383 is G1; that stretch reads GHVDHGKT. 376–383 contributes to the GTP binding site; the sequence is GHVDHGKT. A G2 region spans residues 401-405; that stretch reads GITQH. The interval 424-427 is G3; sequence DTPG. GTP-binding positions include 424-428 and 478-481; these read DTPGH and NKID. The segment at 478 to 481 is G4; it reads NKID. Residues 514–516 are G5; the sequence is SAK.

Belongs to the TRAFAC class translation factor GTPase superfamily. Classic translation factor GTPase family. IF-2 subfamily.

The protein localises to the cytoplasm. One of the essential components for the initiation of protein synthesis. Protects formylmethionyl-tRNA from spontaneous hydrolysis and promotes its binding to the 30S ribosomal subunits. Also involved in the hydrolysis of GTP during the formation of the 70S ribosomal complex. The sequence is that of Translation initiation factor IF-2 from Nitrobacter winogradskyi (strain ATCC 25391 / DSM 10237 / CIP 104748 / NCIMB 11846 / Nb-255).